Consider the following 1113-residue polypeptide: Sterol regulatory element binding protein sbp-1 (1113 aa).

The segment at 1-52 (MNEEFEGDVPMSDPFLSLVTKLDDIAPFPNNDPLDFDMEHNWQEPGPSQQPD) is transcriptional activation (acidic). Disordered regions lie at residues 24–68 (DIAP…EYYD), 101–132 (LGGG…TSPP), 206–274 (SPYD…SPQN), and 290–345 (EVER…SQGT). Residues 229–238 (PHHHHHHPMP) show a composition bias toward basic residues. A compositionally biased stretch (acidic residues) spans 324–337 (AEGDEDEDDEDSDS). A basic motif region spans residues 355–368 (ERRTAHNLIEKKYR). One can recognise a bHLH domain in the interval 355–405 (ERRTAHNLIEKKYRCSINDRIQQLKVLLCGDEAKLSKSATLRRAIEHIEEV). Residues 369 to 405 (CSINDRIQQLKVLLCGDEAKLSKSATLRRAIEHIEEV) are helix-loop-helix motif. Residues 395–422 (LRRAIEHIEEVEHENQVLKHHVEQMRKT) adopt a coiled-coil conformation. Residues 437–472 (TEYSARSPVESSPSPPRNERKRSRMSTTTPMKNGTR) are disordered. 2 helical membrane passes run 478–498 (VTLF…LLAG) and 541–561 (MSYV…KLLI).

In terms of processing, processed in the Golgi apparatus, releasing the protein from the membrane. Post-translationally, ubiquitinated; the nuclear form has a rapid turnover and is rapidly ubiquitinated and degraded by the proteasome in the nucleus. As to expression, broadly expressed, including many cells in the head. Expressed in the intestine.

The protein resides in the nucleus. It is found in the endoplasmic reticulum membrane. Functionally, transcription factor involved in maintaining normal fat levels. Regulates the expression of genes involved in lipid metabolism in response to nutrient availability, such as the fatty-acid desaturases fat-5, fat-6 and fat-7. In response to a high-glucose diet, promotes fatty acid synthesis, elongation and desaturation, acting in concert with transcription factor mxl-3. Plays a role in synthesis of monomethyl branched-chain fatty acids (mmBCFAs) as well as other very-long-chain fatty acids. Downstream of the cis-Golgi membrane protein eas-1/GOLT1B and the E3 ubiquitin ligase rnf-145/RNF145, plays a role in the regulation of glial size, perhaps by modulating synthesis of long-chain polyunsaturated fatty-acids (LC-PUFA). Modulates expression of genes in the one-carbon cycle, which produces the methyl donor S-adenosylmethionine (SAM). Probably involved in a feedback loop in which decreased levels of SAM lead to increased transcriptional activity of sbp-1, thereby causing lipid accumulation. Involved in the negative regulation of zinc homeostasis. Involved in the response to simulated microgravity, in concert with Mediator complex subunit mdt-15, probably acting in the intestine. Plays a role in transgenerational lipid accumulation in response to a high-fat diet, probably acting by upregulating wdr-5.1 expression to increase the level of trimethylated 'Lys-4' histone H3 (H3K4me3), which may then induce the expression of fat-5, fat-6 and fat-7. May act as an oxygen sensor for lipid metabolism. In terms of biological role, precursor of the transcription factor form, which is embedded in the endoplasmic reticulum membrane. Processing of this form allows release of the transcription factor form that translocates into the nucleus and activates transcription of genes involved in sterol biosynthesis and lipid homeostasis. Key transcription factor that regulates expression of genes involved in sterol biosynthesis and lipid homeostasis. The sequence is that of Sterol regulatory element binding protein sbp-1 from Caenorhabditis elegans.